We begin with the raw amino-acid sequence, 159 residues long: Probable cyclic pyranopterin monophosphate synthase (159 aa).

Residues 75–77 (LCH) and 111–112 (ME) contribute to the substrate site. The active site involves Asp-126.

The protein belongs to the MoaC family. As to quaternary structure, homohexamer; trimer of dimers.

It catalyses the reaction (8S)-3',8-cyclo-7,8-dihydroguanosine 5'-triphosphate = cyclic pyranopterin phosphate + diphosphate. It functions in the pathway cofactor biosynthesis; molybdopterin biosynthesis. In terms of biological role, catalyzes the conversion of (8S)-3',8-cyclo-7,8-dihydroguanosine 5'-triphosphate to cyclic pyranopterin monophosphate (cPMP). The chain is Probable cyclic pyranopterin monophosphate synthase from Pyrococcus abyssi (strain GE5 / Orsay).